A 943-amino-acid chain; its full sequence is Isoleucine--tRNA ligase 1 (943 aa).

A 'HIGH' region motif is present at residues 58–68; sequence PYANGTIHIGH. An L-isoleucyl-5'-AMP-binding site is contributed by Glu567. The 'KMSKS' region signature appears at 608 to 612; that stretch reads KMSKS. Lys611 provides a ligand contact to ATP. 4 residues coordinate Zn(2+): Cys906, Cys909, Cys926, and Cys929.

Belongs to the class-I aminoacyl-tRNA synthetase family. IleS type 1 subfamily. As to quaternary structure, monomer. Requires Zn(2+) as cofactor.

It localises to the cytoplasm. The catalysed reaction is tRNA(Ile) + L-isoleucine + ATP = L-isoleucyl-tRNA(Ile) + AMP + diphosphate. Functionally, catalyzes the attachment of isoleucine to tRNA(Ile). As IleRS can inadvertently accommodate and process structurally similar amino acids such as valine, to avoid such errors it has two additional distinct tRNA(Ile)-dependent editing activities. One activity is designated as 'pretransfer' editing and involves the hydrolysis of activated Val-AMP. The other activity is designated 'posttransfer' editing and involves deacylation of mischarged Val-tRNA(Ile). Its function is as follows. Confers resistance to the antibiotic mupirocin (pseudomonic acid A), an Ile-analog produced by P.fluorescens NCIMB 10586 itself that competitively inhibits activation by Ile-tRNA synthetase, thus inhibiting protein biosynthesis. This Pseudomonas fluorescens protein is Isoleucine--tRNA ligase 1 (ileS1).